Consider the following 537-residue polypeptide: Eukaryotic translation initiation factor 3 subunit L (537 aa).

The span at 1–19 shows a compositional bias: basic and acidic residues; the sequence is MSRRVEFDMSHEDHTDRRR. The segment at 1-28 is disordered; that stretch reads MSRRVEFDMSHEDHTDRRRTNTFSSEED. A PCI domain is found at 297 to 485; it reads EATKMFVNCL…GPSTVDDDEP (189 aa).

Belongs to the eIF-3 subunit L family. In terms of assembly, component of the eukaryotic translation initiation factor 3 (eIF-3) complex.

The protein localises to the cytoplasm. Component of the eukaryotic translation initiation factor 3 (eIF-3) complex, which is involved in protein synthesis of a specialized repertoire of mRNAs and, together with other initiation factors, stimulates binding of mRNA and methionyl-tRNAi to the 40S ribosome. The eIF-3 complex specifically targets and initiates translation of a subset of mRNAs involved in cell proliferation. This is Eukaryotic translation initiation factor 3 subunit L from Caenorhabditis briggsae.